The chain runs to 962 residues: Putative primase C962R (962 aa).

Residues 607-775 (ELDARLWIMF…PDPGNPYEKK (169 aa)) enclose the SF3 helicase domain. 636-643 (GGGCNGKT) provides a ligand contact to ATP.

Belongs to the asfivirus helicase C962R family.

This African swine fever virus (strain Badajoz 1971 Vero-adapted) (Ba71V) protein is Putative primase C962R.